The chain runs to 322 residues: Phosphatidylserine decarboxylase proenzyme (322 aa).

Active-site charge relay system; for autoendoproteolytic cleavage activity residues include Asp90, His147, and Ser254. Catalysis depends on Ser254, which acts as the Schiff-base intermediate with substrate; via pyruvic acid; for decarboxylase activity. Pyruvic acid (Ser); by autocatalysis is present on Ser254.

Belongs to the phosphatidylserine decarboxylase family. PSD-B subfamily. Prokaryotic type I sub-subfamily. In terms of assembly, heterodimer of a large membrane-associated beta subunit and a small pyruvoyl-containing alpha subunit. Requires pyruvate as cofactor. Post-translationally, is synthesized initially as an inactive proenzyme. Formation of the active enzyme involves a self-maturation process in which the active site pyruvoyl group is generated from an internal serine residue via an autocatalytic post-translational modification. Two non-identical subunits are generated from the proenzyme in this reaction, and the pyruvate is formed at the N-terminus of the alpha chain, which is derived from the carboxyl end of the proenzyme. The autoendoproteolytic cleavage occurs by a canonical serine protease mechanism, in which the side chain hydroxyl group of the serine supplies its oxygen atom to form the C-terminus of the beta chain, while the remainder of the serine residue undergoes an oxidative deamination to produce ammonia and the pyruvoyl prosthetic group on the alpha chain. During this reaction, the Ser that is part of the protease active site of the proenzyme becomes the pyruvoyl prosthetic group, which constitutes an essential element of the active site of the mature decarboxylase.

It is found in the cell membrane. It carries out the reaction a 1,2-diacyl-sn-glycero-3-phospho-L-serine + H(+) = a 1,2-diacyl-sn-glycero-3-phosphoethanolamine + CO2. It functions in the pathway phospholipid metabolism; phosphatidylethanolamine biosynthesis; phosphatidylethanolamine from CDP-diacylglycerol: step 2/2. Functionally, catalyzes the formation of phosphatidylethanolamine (PtdEtn) from phosphatidylserine (PtdSer). In Shigella dysenteriae serotype 1 (strain Sd197), this protein is Phosphatidylserine decarboxylase proenzyme.